The chain runs to 314 residues: MEDKRNIQIIEWEHLDKKKFYVFGVAMTMMIRVSVYPFTLIRTRLQVQKGKSLYHGTFDAFIKILRADGITGLYRGFLVNTFTLISGQCYVTTYELTRKFVADYSQSNTVKSLVAGGSASLVAQSITVPIDVVSQHLMMQRKGEKMGRFQVRGNPEGQGVVAFGQTKDIIRQILQADGLRGFYRGYVASLLTYIPNSAVWWPFYHFYAEQLSYLCPKECPHIVFQAVSGPLAAATASILTNPMDVIRTRVQVEGKNSIILTFRQLMAEEGPWGLMKGLSARIISATPSTIVIVVGYESLKKLSLRPELVDSRHW.

3 Solcar repeats span residues 18–100 (KKFY…TRKF), 107–210 (SNTV…YAEQ), and 220–302 (PHIV…LKKL). 6 consecutive transmembrane segments (helical) span residues 20–42 (FYVFGVAMTMMIRVSVYPFTLIR), 71–90 (TGLYRGFLVNTFTLISGQCY), 113–133 (LVAGGSASLVAQSITVPIDVV), 185–201 (GYVASLLTYIPNSAVWW), 222–239 (IVFQAVSGPLAAATASIL), and 278–296 (LSARIISATPSTIVIVVGY).

This sequence belongs to the mitochondrial carrier (TC 2.A.29) family.

Its subcellular location is the mitochondrion membrane. The catalysed reaction is L-valine(in) = L-valine(out). It carries out the reaction L-leucine(in) = L-leucine(out). Functionally, mitochondrial solute transporter which transports branched-chain amino acid (BCAA; valine, leucine and isoleucine) into mitochondria in brown adipose tissue (BAT). BAT is involved in BCAA catabolism and actively utilizes BCAA in the mitochondria for thermogenesis. This Homo sapiens (Human) protein is Solute carrier family 25 member 44.